A 304-amino-acid polypeptide reads, in one-letter code: Oxygen-dependent coproporphyrinogen-III oxidase (304 aa).

Residue Ser-95 participates in substrate binding. A divalent metal cation-binding residues include His-99 and His-109. Residue His-109 is the Proton donor of the active site. 111–113 contacts substrate; sequence NVR. A divalent metal cation is bound by residues His-148 and His-178. The tract at residues 243-278 is important for dimerization; sequence YVEFNLVYDRGTLFGLQSGGRTESILMSLPPLVRWR. 261 to 263 lines the substrate pocket; it reads GGR.

It belongs to the aerobic coproporphyrinogen-III oxidase family. As to quaternary structure, homodimer. A divalent metal cation is required as a cofactor.

It is found in the cytoplasm. It catalyses the reaction coproporphyrinogen III + O2 + 2 H(+) = protoporphyrinogen IX + 2 CO2 + 2 H2O. It participates in porphyrin-containing compound metabolism; protoporphyrin-IX biosynthesis; protoporphyrinogen-IX from coproporphyrinogen-III (O2 route): step 1/1. Functionally, involved in the heme biosynthesis. Catalyzes the aerobic oxidative decarboxylation of propionate groups of rings A and B of coproporphyrinogen-III to yield the vinyl groups in protoporphyrinogen-IX. The chain is Oxygen-dependent coproporphyrinogen-III oxidase from Thioalkalivibrio sulfidiphilus (strain HL-EbGR7).